Here is a 392-residue protein sequence, read N- to C-terminus: Bifunctional enzyme Fae/Hps (392 aa).

The segment at 1–161 is formaldehyde-activating enzyme; sequence MFQIGEALMG…EESNKSTHAI (161 aa). His-17 (proton donor) is an active-site residue. Asp-19, Leu-48, Lys-66, Thr-68, and Gln-83 together coordinate substrate. A 3-hexulose-6-phosphate synthase region spans residues 162-392; it reads MGFKVTRLWD…IDQFRVMTDF (231 aa).

It in the N-terminal section; belongs to the formaldehyde-activating enzyme family. This sequence in the C-terminal section; belongs to the HPS/KGPDC family. HPS subfamily.

The enzyme catalyses 5,6,7,8-tetrahydromethanopterin + formaldehyde = 5,10-methylenetetrahydromethanopterin + H2O. It catalyses the reaction D-ribulose 5-phosphate + formaldehyde = D-arabino-hex-3-ulose 6-phosphate. It functions in the pathway carbohydrate biosynthesis; D-ribose 5-phosphate biosynthesis. Functionally, catalyzes the condensation of formaldehyde with tetrahydromethanopterin (H(4)MPT) to 5,10-methylenetetrahydromethanopterin. Catalyzes the reversible formation of ribulose-5-phosphate and formaldehyde from 3-hexulose-6-phosphate. This is Bifunctional enzyme Fae/Hps from Methanosarcina acetivorans (strain ATCC 35395 / DSM 2834 / JCM 12185 / C2A).